Consider the following 416-residue polypeptide: 2-amino-3-ketobutyrate coenzyme A ligase, mitochondrial (416 aa).

A mitochondrion-targeting transit peptide spans 1–18 (MWASFMWHGALSPGRRAH). N6-acetyllysine; alternate is present on lysine 42. Residue lysine 42 is modified to N6-succinyllysine; alternate. 131 to 132 (CF) is a binding site for pyridoxal 5'-phosphate. Residue histidine 156 participates in substrate binding. Residue lysine 184 is modified to N6-acetyllysine; alternate. An N6-succinyllysine; alternate modification is found at lysine 184. Residues serine 203, 259-262 (TLGK), and 292-293 (SN) each bind pyridoxal 5'-phosphate. Lysine 262 bears the N6-(pyridoxal phosphate)lysine mark. N6-succinyllysine is present on residues lysine 323 and lysine 365. Lysine 380 carries the post-translational modification N6-acetyllysine; alternate. Position 380 is an N6-succinyllysine; alternate (lysine 380). Arginine 386 provides a ligand contact to substrate.

It belongs to the class-II pyridoxal-phosphate-dependent aminotransferase family. Requires pyridoxal 5'-phosphate as cofactor.

The protein localises to the mitochondrion. The protein resides in the nucleus. The enzyme catalyses glycine + acetyl-CoA = (2S)-2-amino-3-oxobutanoate + CoA. Its pathway is amino-acid degradation; L-threonine degradation via oxydo-reductase pathway; glycine from L-threonine: step 2/2. Its function is as follows. Pyridoxal phosphate (PLP) dependent enzyme, which catalyzes the cleavage of 2-amino-3-oxobutanoate to glycine and acetyl-CoA. Catalyzes the second reaction step on the main metabolic degradation pathway for L-threonine. This is 2-amino-3-ketobutyrate coenzyme A ligase, mitochondrial (Gcat) from Mus musculus (Mouse).